Consider the following 219-residue polypeptide: Inner membrane protein YccA (219 aa).

Over 1-22 the chain is Periplasmic; that stretch reads MDRIVSSSHDRTSLLSTHKVLR. 2 helical membrane passes run 23 to 43 and 44 to 64; these read NTYF…TAST and VLML…GLMF. Over 65–73 the chain is Periplasmic; sequence LTYKTANKP. A helical membrane pass occupies residues 74–94; sequence TGIISAFAFTGFLGYILGPIL. Over 95 to 104 the chain is Cytoplasmic; that stretch reads NTYLSAGMGD. The helical transmembrane segment at 105 to 125 threads the bilayer; that stretch reads VIAMALGGTALVFFCCSAYVL. At 126-133 the chain is on the periplasmic side; the sequence is TTRKDMSF. The chain crosses the membrane as a helical span at residues 134 to 154; that stretch reads LGGMLMAGIVVVLIGMVANIF. Topologically, residues 155 to 157 are cytoplasmic; that stretch reads LQL. Residues 158-178 form a helical membrane-spanning segment; sequence PALHLAISAVFILISSGAILF. Residues 179–195 lie on the Periplasmic side of the membrane; it reads ETSNIIHGGETNYIRAT. A helical membrane pass occupies residues 196-216; sequence VSLYVSLYNIFVSLLSILGFA. Residues 217-219 lie on the Cytoplasmic side of the membrane; that stretch reads SRD.

This sequence belongs to the BI1 family.

The protein localises to the cell inner membrane. This Escherichia coli O6:H1 (strain CFT073 / ATCC 700928 / UPEC) protein is Inner membrane protein YccA (yccA).